Here is a 107-residue protein sequence, read N- to C-terminus: uncharacterized protein (107 aa).

This is an uncharacterized protein from Dictyostelium discoideum (Social amoeba).